The chain runs to 261 residues: Small ribosomal subunit protein uS2 (261 aa).

The disordered stretch occupies residues 224–261 (GRQGEDDEAVQQEEVAEGVSKDSLEDLKKTVEEGSNEE). Acidic residues predominate over residues 228–239 (EDDEAVQQEEVA). Basic and acidic residues predominate over residues 242–255 (VSKDSLEDLKKTVE).

The protein belongs to the universal ribosomal protein uS2 family.

The sequence is that of Small ribosomal subunit protein uS2 (rpsB) from Pediococcus acidilactici.